Here is a 22-residue protein sequence, read N- to C-terminus: SNVCFNACMKISSSQKTCQILC.

Post-translationally, contains 2 disulfide bonds. Expressed by the venom gland.

It localises to the secreted. In terms of biological role, not lethal to mice by intraperitoneal or intracerebroventricular injections in doses up to 150 micrograms. The chain is 2.4 kDa venom peptide from Heterometrus spinifer (Asia giant forest scorpion).